A 580-amino-acid polypeptide reads, in one-letter code: Adenine deaminase 2 (580 aa).

It belongs to the metallo-dependent hydrolases superfamily. Adenine deaminase family. Mn(2+) is required as a cofactor.

The catalysed reaction is adenine + H2O + H(+) = hypoxanthine + NH4(+). The chain is Adenine deaminase 2 from Latilactobacillus sakei subsp. sakei (strain 23K) (Lactobacillus sakei subsp. sakei).